Reading from the N-terminus, the 648-residue chain is Proton myo-inositol cotransporter (648 aa).

Over 1–76 (MSRKASENVE…AARRQFQQDE (76 aa)) the chain is Cytoplasmic. Ser6, Ser47, and Ser50 each carry phosphoserine. The chain crosses the membrane as a helical span at residues 77-97 (TPAFVYVVAVFSALGGFLFGY). The Extracellular portion of the chain corresponds to 98-125 (DTGVVSGAMLLLKRQLSLDALWQELLVS). The chain crosses the membrane as a helical span at residues 126-146 (STVGAAAVSALAGGALNGVFG). The Cytoplasmic portion of the chain corresponds to 147–148 (RR). Residues 149–169 (AAILLASALFTAGSAVLAAAN) form a helical membrane-spanning segment. The Extracellular portion of the chain corresponds to 170-178 (NKETLLAGR). A helical membrane pass occupies residues 179–199 (LVVGLGIGIASMTVPVYIAEV). Residues 200-212 (SPPNLRGRLVTIN) are Cytoplasmic-facing. The helical transmembrane segment at 213–233 (TLFITGGQFFASVVDGAFSYL) threads the bilayer. Over 234–239 (QKDGWR) the chain is Extracellular. Residues 240-260 (YMLGLAAVPAVIQFFGFLFLP) form a helical membrane-spanning segment. Residues 261-324 (ESPRWLIQKG…RMLSYPPTRR (64 aa)) lie on the Cytoplasmic side of the membrane. The helical transmembrane segment at 325-345 (ALIVGCGLQMFQQLSGINTIM) threads the bilayer. Over 346–363 (YYSATILQMSGVEDDRLA) the chain is Extracellular. A helical transmembrane segment spans residues 364-384 (IWLASVTAFTNFIFTLVGVWL). Residues 385 to 393 (VEKVGRRKL) lie on the Cytoplasmic side of the membrane. A helical transmembrane segment spans residues 394 to 414 (TFGSLAGTTVALIILALGFVL). The Extracellular portion of the chain corresponds to 415–508 (SAQVSPRITF…NFCPTPYSWT (94 aa)). N-linked (GlcNAc...) asparagine glycans are attached at residues Asn433, Asn458, and Asn485. A helical transmembrane segment spans residues 509 to 529 (ALLGLILYLVFFAPGMGPMPW). Topologically, residues 530–549 (TVNSEIYPLWARSTGNACSS) are cytoplasmic. Residues 550–570 (GINWIFNVLVSLTFLHTAEYL) traverse the membrane as a helical segment. The Extracellular segment spans residues 571 to 573 (TYY). Residues 574 to 594 (GAFFLYAGFAAVGLLFIYGCL) form a helical membrane-spanning segment. Residues 595–648 (PETKGKKLEEIESLFDNRLCTCGTSDSDEGRYIEYIRVKGSNYHLSDNDASDVE) are Cytoplasmic-facing. 2 positions are modified to phosphoserine: Ser640 and Ser645.

This sequence belongs to the major facilitator superfamily. Sugar transporter (TC 2.A.1.1) family. In terms of processing, glycosylated. In terms of tissue distribution, predominantly expressed in the brain.

It is found in the cell membrane. The catalysed reaction is myo-inositol(out) + H(+)(out) = myo-inositol(in) + H(+)(in). In terms of biological role, h(+)-myo-inositol cotransporter. Can also transport related stereoisomers. This is Proton myo-inositol cotransporter from Homo sapiens (Human).